Consider the following 165-residue polypeptide: Interferon gamma (165 aa).

Residues 1–23 form the signal peptide; the sequence is MKYTSYILAFQLCIVLGSLGCYC. Glutamine 24 is subject to Pyrrolidone carboxylic acid. N-linked (GlcNAc...) asparagine glycans are attached at residues asparagine 48 and asparagine 120.

It belongs to the type II (or gamma) interferon family. In terms of assembly, homodimer. Interacts with IFNGR1 (via extracellular domain); this interaction promotes IFNGR1 dimerization. Released primarily from activated T lymphocytes.

The protein resides in the secreted. Type II interferon produced by immune cells such as T-cells and NK cells that plays crucial roles in antimicrobial, antiviral, and antitumor responses by activating effector immune cells and enhancing antigen presentation. Primarily signals through the JAK-STAT pathway after interaction with its receptor IFNGR1 to affect gene regulation. Upon IFNG binding, IFNGR1 intracellular domain opens out to allow association of downstream signaling components JAK2, JAK1 and STAT1, leading to STAT1 activation, nuclear translocation and transcription of IFNG-regulated genes. Many of the induced genes are transcription factors such as IRF1 that are able to further drive regulation of a next wave of transcription. Plays a role in class I antigen presentation pathway by inducing a replacement of catalytic proteasome subunits with immunoproteasome subunits. In turn, increases the quantity, quality, and repertoire of peptides for class I MHC loading. Increases the efficiency of peptide generation also by inducing the expression of activator PA28 that associates with the proteasome and alters its proteolytic cleavage preference. Up-regulates as well MHC II complexes on the cell surface by promoting expression of several key molecules such as cathepsins B/CTSB, H/CTSH, and L/CTSL. Participates in the regulation of hematopoietic stem cells during development and under homeostatic conditions by affecting their development, quiescence, and differentiation. This chain is Interferon gamma (IFNG), found in Macaca fascicularis (Crab-eating macaque).